A 428-amino-acid chain; its full sequence is Histidine--tRNA ligase (428 aa).

This sequence belongs to the class-II aminoacyl-tRNA synthetase family. As to quaternary structure, homodimer.

The protein resides in the cytoplasm. It carries out the reaction tRNA(His) + L-histidine + ATP = L-histidyl-tRNA(His) + AMP + diphosphate + H(+). The sequence is that of Histidine--tRNA ligase from Lactobacillus gasseri (strain ATCC 33323 / DSM 20243 / BCRC 14619 / CIP 102991 / JCM 1131 / KCTC 3163 / NCIMB 11718 / NCTC 13722 / AM63).